A 292-amino-acid chain; its full sequence is Bifunctional protein FolD (292 aa).

Residues 166 to 168, S191, and I232 each bind NADP(+); that span reads GRS.

Belongs to the tetrahydrofolate dehydrogenase/cyclohydrolase family. As to quaternary structure, homodimer.

The catalysed reaction is (6R)-5,10-methylene-5,6,7,8-tetrahydrofolate + NADP(+) = (6R)-5,10-methenyltetrahydrofolate + NADPH. The enzyme catalyses (6R)-5,10-methenyltetrahydrofolate + H2O = (6R)-10-formyltetrahydrofolate + H(+). The protein operates within one-carbon metabolism; tetrahydrofolate interconversion. Catalyzes the oxidation of 5,10-methylenetetrahydrofolate to 5,10-methenyltetrahydrofolate and then the hydrolysis of 5,10-methenyltetrahydrofolate to 10-formyltetrahydrofolate. In Wolbachia sp. subsp. Drosophila simulans (strain wRi), this protein is Bifunctional protein FolD.